Reading from the N-terminus, the 343-residue chain is tRNA N6-adenosine threonylcarbamoyltransferase (343 aa).

Positions 114 and 118 each coordinate Fe cation. Substrate-binding positions include 137-141, aspartate 171, glycine 184, aspartate 188, and asparagine 278; that span reads LVSGG. A Fe cation-binding site is contributed by aspartate 306.

This sequence belongs to the KAE1 / TsaD family. It depends on Fe(2+) as a cofactor.

The protein localises to the cytoplasm. The catalysed reaction is L-threonylcarbamoyladenylate + adenosine(37) in tRNA = N(6)-L-threonylcarbamoyladenosine(37) in tRNA + AMP + H(+). Its function is as follows. Required for the formation of a threonylcarbamoyl group on adenosine at position 37 (t(6)A37) in tRNAs that read codons beginning with adenine. Is involved in the transfer of the threonylcarbamoyl moiety of threonylcarbamoyl-AMP (TC-AMP) to the N6 group of A37, together with TsaE and TsaB. TsaD likely plays a direct catalytic role in this reaction. The protein is tRNA N6-adenosine threonylcarbamoyltransferase of Acidothermus cellulolyticus (strain ATCC 43068 / DSM 8971 / 11B).